Reading from the N-terminus, the 627-residue chain is uncharacterized protein (627 aa).

2 disordered regions span residues 141–187 (LRYP…TPPS) and 490–510 (ENEN…GPRT). The segment covering 491 to 510 (NENTNGSANNSTYTNGGPRT) has biased composition (polar residues). A Phosphoserine modification is found at serine 559.

This is an uncharacterized protein from Saccharomyces cerevisiae (strain ATCC 204508 / S288c) (Baker's yeast).